A 233-amino-acid polypeptide reads, in one-letter code: 5'-methylthioadenosine/S-adenosylhomocysteine nucleosidase (233 aa).

The Proton acceptor role is filled by glutamate 12. Substrate-binding positions include glycine 78, isoleucine 152, and 173–174; that span reads ME. The Proton donor role is filled by aspartate 197.

This sequence belongs to the PNP/UDP phosphorylase family. MtnN subfamily. Homodimer.

The catalysed reaction is S-adenosyl-L-homocysteine + H2O = S-(5-deoxy-D-ribos-5-yl)-L-homocysteine + adenine. The enzyme catalyses S-methyl-5'-thioadenosine + H2O = 5-(methylsulfanyl)-D-ribose + adenine. It catalyses the reaction 5'-deoxyadenosine + H2O = 5-deoxy-D-ribose + adenine. It participates in amino-acid biosynthesis; L-methionine biosynthesis via salvage pathway; S-methyl-5-thio-alpha-D-ribose 1-phosphate from S-methyl-5'-thioadenosine (hydrolase route): step 1/2. Its function is as follows. Catalyzes the irreversible cleavage of the glycosidic bond in both 5'-methylthioadenosine (MTA) and S-adenosylhomocysteine (SAH/AdoHcy) to adenine and the corresponding thioribose, 5'-methylthioribose and S-ribosylhomocysteine, respectively. Also cleaves 5'-deoxyadenosine, a toxic by-product of radical S-adenosylmethionine (SAM) enzymes, into 5-deoxyribose and adenine. Thus, is required for in vivo function of the radical SAM enzymes biotin synthase and lipoic acid synthase, that are inhibited by 5'-deoxyadenosine accumulation. This Sodalis glossinidius (strain morsitans) protein is 5'-methylthioadenosine/S-adenosylhomocysteine nucleosidase.